A 325-amino-acid chain; its full sequence is Probable NADH kinase (325 aa).

Belongs to the NAD kinase family. As to quaternary structure, homodimer.

It is found in the cytoplasm. It carries out the reaction NADH + ATP = ADP + NADPH + H(+). Its function is as follows. Key source of the cellular reductant NADPH which is an important antioxidant factor. The sequence is that of Probable NADH kinase from Oryza sativa subsp. japonica (Rice).